The primary structure comprises 306 residues: Glutaminase (306 aa).

Residues Ser-64, Asn-115, Glu-159, Asn-166, Tyr-190, Tyr-242, and Val-260 each coordinate substrate.

This sequence belongs to the glutaminase family. In terms of assembly, homotetramer.

The catalysed reaction is L-glutamine + H2O = L-glutamate + NH4(+). This Photobacterium profundum (strain SS9) protein is Glutaminase.